The chain runs to 1026 residues: Multidrug resistance protein MdtC (1026 aa).

The next 11 helical transmembrane spans lie at 15–35 (ILIA…LPVA), 333–353 (EVEE…FLFL), 360–380 (LIPA…MYLC), 387–407 (LSLM…IVVL), 431–451 (VGFT…PLLL), 463–483 (FAVT…TLTP), 528–548 (LVGV…IAIP), 853–873 (LILI…LYES), 897–917 (LFNA…IGIV), 953–973 (PIMM…LSGG), and 984–1004 (ITIV…TPVV).

The protein belongs to the resistance-nodulation-cell division (RND) (TC 2.A.6) family. MdtC subfamily. In terms of assembly, part of a tripartite efflux system composed of MdtA, MdtB and MdtC. MdtC forms a heteromultimer with MdtB.

Its subcellular location is the cell inner membrane. This is Multidrug resistance protein MdtC from Salmonella paratyphi A (strain AKU_12601).